We begin with the raw amino-acid sequence, 177 residues long: Hypoxanthine phosphoribosyltransferase (177 aa).

The diphosphate site is built by arginine 43 and glycine 44. Residue glutamate 99 participates in GMP binding. IMP is bound at residue glutamate 99. Mg(2+) contacts are provided by glutamate 99 and aspartate 100. Residue aspartate 103 is the Proton acceptor of the active site. GMP contacts are provided by residues 103–108 (DSGKTL), lysine 131, and aspartate 159. IMP-binding positions include 103–108 (DSGKTL) and lysine 131. Diphosphate is bound at residue arginine 165.

This sequence belongs to the purine/pyrimidine phosphoribosyltransferase family. In terms of assembly, homotetramer. It depends on Mg(2+) as a cofactor.

The protein localises to the cytoplasm. It carries out the reaction IMP + diphosphate = hypoxanthine + 5-phospho-alpha-D-ribose 1-diphosphate. It catalyses the reaction GMP + diphosphate = guanine + 5-phospho-alpha-D-ribose 1-diphosphate. It participates in purine metabolism; IMP biosynthesis via salvage pathway; IMP from hypoxanthine: step 1/1. Purine salvage pathway enzyme which catalyzes the transfer of the ribosyl-5-phosphate group from 5-phospho-alpha-D-ribose 1-diphosphate (PRPP) to the N9 position of hypoxanthine to yield IMP (inosine 5'-monophosphate). To a lesser extent, can also act on guanine leading to GMP, but shows a highly less efficient activity with xanthine. This is Hypoxanthine phosphoribosyltransferase (hpt) from Buchnera aphidicola subsp. Schizaphis graminum (strain Sg).